Consider the following 283-residue polypeptide: Tyrosine recombinase THA_404 (283 aa).

The region spanning 1–86 is the Core-binding (CB) domain; sequence MDKVIEMFSD…SLNSFFNYLE (86 aa). The Tyr recombinase domain occupies 107–281; the sequence is KIPDFLTEDE…ADQEKFDAVK (175 aa). Catalysis depends on residues arginine 145, lysine 170, histidine 233, arginine 236, and histidine 259. Tyrosine 268 acts as the O-(3'-phospho-DNA)-tyrosine intermediate in catalysis.

The protein belongs to the 'phage' integrase family.

The protein localises to the cytoplasm. Site-specific tyrosine recombinase, which acts by catalyzing the cutting and rejoining of the recombining DNA molecules. The chain is Tyrosine recombinase THA_404 from Thermosipho africanus (strain TCF52B).